We begin with the raw amino-acid sequence, 259 residues long: Taurine import ATP-binding protein TauB (259 aa).

The 230-residue stretch at 4 to 233 folds into the ABC transporter domain; sequence LELERISAQY…RYAAGESARA (230 aa). 38–45 lines the ATP pocket; that stretch reads GPSGSGKT.

It belongs to the ABC transporter superfamily. Taurine importer (TC 3.A.1.17.1) family. In terms of assembly, the complex is composed of two ATP-binding proteins (TauB), two transmembrane proteins (TauC) and a solute-binding protein (TauA).

It is found in the cell inner membrane. It carries out the reaction taurine(out) + ATP + H2O = taurine(in) + ADP + phosphate + H(+). Its function is as follows. Part of the ABC transporter complex TauABC involved in taurine import. Responsible for energy coupling to the transport system. The protein is Taurine import ATP-binding protein TauB of Pseudomonas entomophila (strain L48).